Here is a 917-residue protein sequence, read N- to C-terminus: Thiamine biosynthesis bifunctional protein ThiEC (917 aa).

Residues 1 to 243 (MSNEYPYASM…EGWKAVRGDK (243 aa)) are thiamine-phosphate synthase. 4-amino-2-methyl-5-(diphosphooxymethyl)pyrimidine is bound by residues 48 to 52 (QLRAK) and Asp-84. Residues Asp-85 and Asp-109 each coordinate Mg(2+). 4-amino-2-methyl-5-(diphosphooxymethyl)pyrimidine is bound at residue Ser-128. 157 to 159 (STT) lines the 2-[(2R,5Z)-2-carboxy-4-methylthiazol-5(2H)-ylidene]ethyl phosphate pocket. A 4-amino-2-methyl-5-(diphosphooxymethyl)pyrimidine-binding site is contributed by Lys-160. Residues Gly-196 and 216 to 217 (VS) contribute to the 2-[(2R,5Z)-2-carboxy-4-methylthiazol-5(2H)-ylidene]ethyl phosphate site. The interval 256–311 (PATDTQAAQEGAAKPGSEATEKKFTNAKDAKDAQKLAKQQRVDIAARGSKQRDKAH) is disordered. Residues 271 to 917 (GSEATEKKFT…GGKLYSTAQE (647 aa)) are phosphomethylpyrimidine synthase. Over residues 274–290 (ATEKKFTNAKDAKDAQK) the composition is skewed to basic and acidic residues. 5-amino-1-(5-phospho-beta-D-ribosyl)imidazole contacts are provided by residues Asn-487, Met-516, Tyr-545, His-581, 601-603 (SRG), 642-645 (DGLR), and Glu-681. Residue His-685 participates in Zn(2+) binding. 5-amino-1-(5-phospho-beta-D-ribosyl)imidazole is bound at residue Tyr-708. Residue His-749 participates in Zn(2+) binding. [4Fe-4S] cluster contacts are provided by Cys-829, Cys-832, and Cys-837.

This sequence in the N-terminal section; belongs to the thiamine-phosphate synthase family. It in the C-terminal section; belongs to the ThiC family. Requires [4Fe-4S] cluster as cofactor.

It catalyses the reaction 2-[(2R,5Z)-2-carboxy-4-methylthiazol-5(2H)-ylidene]ethyl phosphate + 4-amino-2-methyl-5-(diphosphooxymethyl)pyrimidine + 2 H(+) = thiamine phosphate + CO2 + diphosphate. It carries out the reaction 2-(2-carboxy-4-methylthiazol-5-yl)ethyl phosphate + 4-amino-2-methyl-5-(diphosphooxymethyl)pyrimidine + 2 H(+) = thiamine phosphate + CO2 + diphosphate. The catalysed reaction is 4-methyl-5-(2-phosphooxyethyl)-thiazole + 4-amino-2-methyl-5-(diphosphooxymethyl)pyrimidine + H(+) = thiamine phosphate + diphosphate. The enzyme catalyses 5-amino-1-(5-phospho-beta-D-ribosyl)imidazole + S-adenosyl-L-methionine = 4-amino-2-methyl-5-(phosphooxymethyl)pyrimidine + CO + 5'-deoxyadenosine + formate + L-methionine + 3 H(+). The protein operates within cofactor biosynthesis; thiamine diphosphate biosynthesis; thiamine phosphate from 4-amino-2-methyl-5-diphosphomethylpyrimidine and 4-methyl-5-(2-phosphoethyl)-thiazole: step 1/1. Condenses 4-methyl-5-(beta-hydroxyethyl)thiazole monophosphate (THZ-P) and 2-methyl-4-amino-5-hydroxymethyl pyrimidine pyrophosphate (HMP-PP) to form thiamine monophosphate (TMP). Functionally, catalyzes the synthesis of the hydroxymethylpyrimidine phosphate (HMP-P) moiety of thiamine from aminoimidazole ribotide (AIR) in a radical S-adenosyl-L-methionine (SAM)-dependent reaction. In Bifidobacterium longum (strain NCC 2705), this protein is Thiamine biosynthesis bifunctional protein ThiEC (thiE/thiC).